The sequence spans 949 residues: ATPase 1, plasma membrane-type (949 aa).

Residue serine 2 is modified to N-acetylserine. Topologically, residues 2–61 are cytoplasmic; sequence SGLEDIKNETVDLEKIPIEEVFQQLKCTREGLTTQEGEDRIVIFGPNKLEEKKESKILKF. A helical membrane pass occupies residues 62–81; the sequence is LGFMWNPLSWVMEAAALMAI. At 82-93 the chain is on the extracellular side; it reads ALANGDNRPPDW. The chain crosses the membrane as a helical span at residues 94 to 114; it reads QDFVGIICLLVINSTISFIEE. Residues 115–243 lie on the Cytoplasmic side of the membrane; sequence NNAGNAAAAL…GHFQKVLTSI (129 aa). The helical transmembrane segment at 244 to 264 threads the bilayer; it reads GNFCICSIAIGIAIEIVVMYP. Over 265-273 the chain is Extracellular; that stretch reads IQHRKYRDG. The helical transmembrane segment at 274–291 threads the bilayer; sequence IDNLLVLLIGGIPIAMPT. Topologically, residues 292–643 are cytoplasmic; the sequence is VLSVTMAIGS…TSRAIFQRMK (352 aa). Aspartate 329 serves as the catalytic 4-aspartylphosphate intermediate. Mg(2+) is bound by residues aspartate 588 and aspartate 592. Residues 644 to 665 traverse the membrane as a helical segment; that stretch reads NYTIYAVSITIRIVFGFMLIAL. Residues 666–670 are Extracellular-facing; sequence IWEFD. Residues 671-693 form a helical membrane-spanning segment; sequence FSAFMVLIIAILNDGTIMTISKD. At 694–709 the chain is on the cytoplasmic side; it reads RVKPSPTPDSWKLKEI. The chain crosses the membrane as a helical span at residues 710 to 730; sequence FATGIVLGGYQAIMSVIFFWA. The Extracellular portion of the chain corresponds to 731-751; that stretch reads AHKTDFFSDKFGVRSIRDNND. A helical transmembrane segment spans residues 752–772; sequence ELMGAVYLQVSIISQALIFVT. Over 773–784 the chain is Cytoplasmic; the sequence is RSRSWSFVERPG. The helical transmembrane segment at 785 to 805 threads the bilayer; sequence ALLMIAFVIAQLVATLIAVYA. Topologically, residues 806 to 813 are extracellular; sequence DWTFAKVK. A helical membrane pass occupies residues 814-834; that stretch reads GIGWGWAGVIWIYSIVTYFPQ. Over 835–949 the chain is Cytoplasmic; the sequence is DILKFAIRYI…IDTAGHHYTV (115 aa). Position 881 is a phosphothreonine (threonine 881). Residues serine 899 and serine 931 each carry the phosphoserine modification. An interaction with 14-3-3 proteins region spans residues 947 to 949; that stretch reads YTV. Threonine 948 is modified (phosphothreonine).

The protein belongs to the cation transport ATPase (P-type) (TC 3.A.3) family. Type IIIA subfamily. As to quaternary structure, binds to 14-3-3 proteins. The binding is induced by phosphorylation of Thr-948. Binding to 14-3-3 proteins activates the H(+)-ATPase. Interacts with PPI1; this interaction promotes ATPase activity. Interacts with PSY1R. Part of a functional complex containing PSKR1, BAK1, CNGC17, and AHA. Interacts with CNGC17 and PSKR1. Triggered by SAUR9 via the phosphorylation of the C-terminal autoinhibitory domain. Interacts with AHA2. Binds to CBC1 and CBC2. Phosphorylated, probably by PHOT1 and PHOT2, at C-terminal Thr-948 in guard cells in response to blue light to induce stomatal opening. Expressed in guard cells, mesophyll cells, leaves and roots.

It is found in the cell membrane. It carries out the reaction ATP + H2O + H(+)(in) = ADP + phosphate + 2 H(+)(out). Its activity is regulated as follows. Phosphorylation on Thr residues is repressed by tyrphostin 9, sphingosine, GW5074 and BML-265. By contrast, the fungal phytotoxin fusicoccin (FC) promotes phosphorylation of Thr-948 independently to BHP, thus leading to large stomatal opening. Functionally, the plasma membrane H(+) ATPase of plants and fungi generates a proton gradient that drives the active transport of nutrients by H(+)-symport. The resulting external acidification and/or internal alkinization may mediate growth responses. Forms a functional cation-translocating unit with CNGC17 that is activated by PSKR1/BAK1 and possibly other BAK1/RLK complexes. Promotes stomatal opening in response to blue light. In Arabidopsis thaliana (Mouse-ear cress), this protein is ATPase 1, plasma membrane-type.